The primary structure comprises 300 residues: Protein ARMCX6 (300 aa).

Topologically, residues 1 to 6 (MGRARE) are mitochondrial intermembrane. Mitochondrion outer membrane (MOM)-targeting sequence regions lie at residues 1–6 (MGRARE) and 26–36 (KLTIGRDDSEK). The helical; Signal-anchor transmembrane segment at 7–27 (VGWMAAGLMIGAGACYCVYKL) threads the bilayer. The Cytoplasmic portion of the chain corresponds to 28-300 (TIGRDDSEKL…REILLETPAP (273 aa)). 2 disordered regions span residues 35–54 (EKLEEEGEEEWDDDQELDEE) and 69–99 (WTEDGDWTEPGAPGGTEDRPSGGGKANRAHP).

Belongs to the eutherian X-chromosome-specific Armcx family.

The protein localises to the mitochondrion. The protein resides in the mitochondrion outer membrane. Its function is as follows. May regulate the dynamics and distribution of mitochondria in neural cells. This Homo sapiens (Human) protein is Protein ARMCX6 (ARMCX6).